Reading from the N-terminus, the 317-residue chain is Neurogenic differentiation factor 6-B (317 aa).

Disordered regions lie at residues 1-90 (MLTV…ERSR) and 297-317 (DLHPRSQSFQSQDELNTGYHN). The segment covering 37-56 (EAEDDNTDREEEEEREEDEN) has biased composition (acidic residues). Over residues 59–69 (PKKKGPRKKKS) the composition is skewed to basic residues. A Nuclear localization signal motif is present at residues 65–70 (RKKKSE). The span at 70-90 (EGRGDRVKMRRQEANARERSR) shows a compositional bias: basic and acidic residues. The bHLH domain occupies 78 to 130 (MRRQEANARERSRMHGLNDALESLRKVVPCYSKTQKLSKIETLRLAKNYIWAL). Residues 301-317 (RSQSFQSQDELNTGYHN) show a composition bias toward polar residues.

Efficient DNA binding requires dimerization with another bHLH protein. Embryonic olfactory bulbs and olfactory placodes. In adult, expressed in brain and eye.

It localises to the nucleus. Functionally, differentiation factor required for neurogenesis. Does not act as an upstream activator of isl1. This is Neurogenic differentiation factor 6-B from Danio rerio (Zebrafish).